Here is a 278-residue protein sequence, read N- to C-terminus: Large ribosomal subunit protein uL2 (278 aa).

Disordered regions lie at residues 33-53 and 219-278; these read LTEG…TSRG and LTRG…KKKR. The segment covering 269 to 278 has biased composition (basic residues); the sequence is IRSRHAKKKR.

It belongs to the universal ribosomal protein uL2 family. In terms of assembly, part of the 50S ribosomal subunit. Forms a bridge to the 30S subunit in the 70S ribosome.

Its function is as follows. One of the primary rRNA binding proteins. Required for association of the 30S and 50S subunits to form the 70S ribosome, for tRNA binding and peptide bond formation. It has been suggested to have peptidyltransferase activity; this is somewhat controversial. Makes several contacts with the 16S rRNA in the 70S ribosome. The polypeptide is Large ribosomal subunit protein uL2 (Sphingopyxis alaskensis (strain DSM 13593 / LMG 18877 / RB2256) (Sphingomonas alaskensis)).